The following is a 139-amino-acid chain: MDTPCKLFCIELKEGYVPGTVSHNHMMPYFLAGSGWPVEITFHAATVELKTQEDFPPAIGIGIHNMTGVPVVETPHSGRMHFVFIFHSKSGRFSATYKCIPVPVVVRDYKTVASVSLTTLSLEDIVGVKLFGTACDRSS.

This is an uncharacterized protein from Dryophytes versicolor (chameleon treefrog).